Here is a 396-residue protein sequence, read N- to C-terminus: Arginine biosynthesis bifunctional protein ArgJ (396 aa).

Substrate-binding residues include Thr147, Lys173, Thr184, Glu270, Asn391, and Ser396. Thr184 acts as the Nucleophile in catalysis.

The protein belongs to the ArgJ family. As to quaternary structure, heterotetramer of two alpha and two beta chains.

The protein resides in the cytoplasm. The catalysed reaction is N(2)-acetyl-L-ornithine + L-glutamate = N-acetyl-L-glutamate + L-ornithine. The enzyme catalyses L-glutamate + acetyl-CoA = N-acetyl-L-glutamate + CoA + H(+). It functions in the pathway amino-acid biosynthesis; L-arginine biosynthesis; L-ornithine and N-acetyl-L-glutamate from L-glutamate and N(2)-acetyl-L-ornithine (cyclic): step 1/1. The protein operates within amino-acid biosynthesis; L-arginine biosynthesis; N(2)-acetyl-L-ornithine from L-glutamate: step 1/4. Catalyzes two activities which are involved in the cyclic version of arginine biosynthesis: the synthesis of N-acetylglutamate from glutamate and acetyl-CoA as the acetyl donor, and of ornithine by transacetylation between N(2)-acetylornithine and glutamate. The sequence is that of Arginine biosynthesis bifunctional protein ArgJ from Lactococcus lactis subsp. lactis (strain IL1403) (Streptococcus lactis).